Consider the following 130-residue polypeptide: Transcription antitermination protein NusB (130 aa).

The protein belongs to the NusB family.

In terms of biological role, involved in transcription antitermination. Required for transcription of ribosomal RNA (rRNA) genes. Binds specifically to the boxA antiterminator sequence of the ribosomal RNA (rrn) operons. The sequence is that of Transcription antitermination protein NusB from Bacillus mycoides (strain KBAB4) (Bacillus weihenstephanensis).